The following is a 152-amino-acid chain: Large-conductance mechanosensitive channel (152 aa).

A run of 3 helical transmembrane segments spans residues 21 to 41 (IDLAVGVIIGAAFGKIVDSLV), 44 to 64 (VVMPLVNFILGGSVDFSNKFL), and 92 to 112 (GNFITIIINFVLLAFVIFWMV).

It belongs to the MscL family. As to quaternary structure, homopentamer.

Its subcellular location is the cell inner membrane. Its function is as follows. Channel that opens in response to stretch forces in the membrane lipid bilayer. May participate in the regulation of osmotic pressure changes within the cell. This chain is Large-conductance mechanosensitive channel, found in Bordetella pertussis (strain Tohama I / ATCC BAA-589 / NCTC 13251).